A 125-amino-acid chain; its full sequence is UPF0593 mitochondrial protein C806.05 (125 aa).

It belongs to the UPF0593 family.

The protein localises to the mitochondrion. This chain is UPF0593 mitochondrial protein C806.05, found in Schizosaccharomyces pombe (strain 972 / ATCC 24843) (Fission yeast).